We begin with the raw amino-acid sequence, 126 residues long: UPF0332 protein glr0978 (126 aa).

Belongs to the UPF0332 family.

This is UPF0332 protein glr0978 from Gloeobacter violaceus (strain ATCC 29082 / PCC 7421).